Reading from the N-terminus, the 562-residue chain is Membrane protein insertase YidC (562 aa).

Residues 1 to 21 (MDIKRTILIVALAIVTYVGVL) form a helical membrane-spanning segment. Residues 42–74 (TAPGIPDTAAGNNGSASADVPSATGNTTSAAPL) form a disordered region. The next 5 helical transmembrane spans lie at 343–363 (LELT…FWLL), 369–389 (ILGN…GLFF), 439–459 (LGGC…YWVL), 470–490 (WILW…PIIM), and 517–537 (PIIF…YWVV).

The protein belongs to the OXA1/ALB3/YidC family. Type 1 subfamily. Interacts with the Sec translocase complex via SecD. Specifically interacts with transmembrane segments of nascent integral membrane proteins during membrane integration.

It is found in the cell inner membrane. Its function is as follows. Required for the insertion and/or proper folding and/or complex formation of integral membrane proteins into the membrane. Involved in integration of membrane proteins that insert both dependently and independently of the Sec translocase complex, as well as at least some lipoproteins. Aids folding of multispanning membrane proteins. This Pseudomonas syringae pv. tomato (strain ATCC BAA-871 / DC3000) protein is Membrane protein insertase YidC.